The primary structure comprises 568 residues: Zinc finger protein 76 (568 aa).

K24 participates in a covalent cross-link: Glycyl lysine isopeptide (Lys-Gly) (interchain with G-Cter in SUMO2). Repeat copies occupy residues 34–45 (IQLEDGTTAYIH), 62–73 (VQLEDGSMAYIH), and 88–99 (VQLEDGSTAYIH). The segment at 34 to 99 (IQLEDGTTAY…LEDGSTAYIH (66 aa)) is 3 X 12 AA approximate repeats. 7 C2H2-type zinc fingers span residues 165-189 (FRCG…ERAH), 195-219 (YRCD…VRTH), 225-249 (YKCP…VRTH), 255-279 (FRCP…VRTH), 285-309 (YTCP…VRIH), 315-339 (YVCT…HVVH), and 345-368 (YTCS…RSAH). Residues 365–402 (RSAHGELEATEESEQALYEQQQLEAASAAEESPPPKPT) are disordered. A compositionally biased stretch (low complexity) spans 379–395 (QALYEQQQLEAASAAEE).

The protein belongs to the krueppel C2H2-type zinc-finger protein family.

The protein localises to the nucleus. In terms of biological role, may be involved in transcriptional regulation. The chain is Zinc finger protein 76 (Znf76) from Mus musculus (Mouse).